The sequence spans 629 residues: Ionotropic receptor 75a (629 aa).

Residues 1 to 335 (MQLVQLANFV…GDVFLQPFSP (335 aa)) lie on the Extracellular side of the membrane. N-linked (GlcNAc...) asparagine glycans are attached at residues asparagine 61, asparagine 112, asparagine 126, asparagine 144, asparagine 166, and asparagine 232. The chain crosses the membrane as a helical span at residues 336 to 356 (LVWYLFGGVLSLIGVLLWITF). The Cytoplasmic portion of the chain corresponds to 357–374 (YMECKRMQKRWRLDYLPS). Residues 375–395 (LLSTFLISFGAACIQSSSLIP) traverse the membrane as a helical segment. Residues 396–402 (RSAGGRL) are Extracellular-facing. Residues 403 to 423 (IYFALFLISFIMYNYYTSVVV) traverse the membrane as a helical segment. Residues 424-592 (SSLLSSPVKS…NFVITVGMEY (169 aa)) lie on the Cytoplasmic side of the membrane. A helical transmembrane segment spans residues 593–613 (VAPLLLMLICADILVVVILLV). At 614 to 629 (ELAWKRFFTRHLTFHP) the chain is on the extracellular side.

Belongs to the glutamate-gated ion channel (TC 1.A.10.1) family. As to expression, expressed in acetic-acid-sensing neurons in the antennal coeloconic 2 (ac2) and antennal coeloconic 3 (ac3) sensilla class of sensory hairs (at protein level).

It is found in the cell membrane. Its subcellular location is the cell projection. The protein localises to the dendrite. Functionally, odorant receptor for acetic and propionic acid. Functions as part of an olfactory receptor complex including the ionotropic receptor coreceptor Ir8a. This Drosophila melanogaster (Fruit fly) protein is Ionotropic receptor 75a.